We begin with the raw amino-acid sequence, 331 residues long: Cytochrome bo(3) ubiquinol oxidase subunit 2 (331 aa).

The N-terminal stretch at 1–23 (MTKANPFAALKWLSLAPALLLGG) is a signal peptide. C24 is lipidated: N-palmitoyl cysteine. A lipid anchor (S-diacylglycerol cysteine) is attached at C24. The Periplasmic segment spans residues 24–41 (CDMTLFNPKGQVGMDERT). Residues 42–62 (LIITATLLMLIVVIPVIVMTL) form a helical membrane-spanning segment. Over 63–86 (AFAWKYRASNTQAEYKPDWHHSNR) the chain is Cytoplasmic. Residues 87–107 (IEAVVWLVPCVIIAILGWITW) traverse the membrane as a helical segment. Over 108–331 (ESTHKLDPYR…DMHMQPSTQE (224 aa)) the chain is Periplasmic.

It belongs to the cytochrome c oxidase subunit 2 family. In terms of assembly, heterooctamer of two A chains, two B chains, two C chains and two D chains.

It localises to the cell inner membrane. Its function is as follows. Cytochrome bo(3) ubiquinol terminal oxidase is the component of the aerobic respiratory chain of E.coli that predominates when cells are grown at high aeration. Has proton pump activity across the membrane in addition to electron transfer, pumping 2 protons/electron. The sequence is that of Cytochrome bo(3) ubiquinol oxidase subunit 2 (cyoA) from Pseudomonas aeruginosa (strain ATCC 15692 / DSM 22644 / CIP 104116 / JCM 14847 / LMG 12228 / 1C / PRS 101 / PAO1).